A 223-amino-acid polypeptide reads, in one-letter code: UPF0441 protein YgiB (223 aa).

Positions 178–195 (TVPKTAMAPKPATTTTVT) are enriched in low complexity. The segment at 178 to 223 (TVPKTAMAPKPATTTTVTRGGFGESVAKQSTMQRSATGTSSRSMGG) is disordered. Positions 204 to 223 (AKQSTMQRSATGTSSRSMGG) are enriched in polar residues.

This sequence belongs to the UPF0441 family.

The protein is UPF0441 protein YgiB of Shigella boydii serotype 18 (strain CDC 3083-94 / BS512).